A 313-amino-acid chain; its full sequence is MRIVFVGTPEFAAEILEHLIKNGFNVVGVVTQPDKPRGRGRKVEPTPVKVVAEKHRVPFIQPESINKKEALEFLRSVGPDVIIVASYGKILGEKVLSLPSLGCYNIHPSLLPKYRGASPIQRVLENGEERTGVTIYKMVRELDAGPIALQREISIDPFETFDQLEKRLIELSKEMSIEFLEKLKVGDIELKEQDHSRATYAPMIKKEDLIVDFSKDAESVKNKIRAYDSRPGARAFLGNDEVKLFGVTAIDSSGDEPGLIHYIDREGAWIGTGKGMVKVKYLQLPGKKKLTFWELRNGRLIEEGMKLEGRYES.

109-112 (SLLP) contributes to the (6S)-5,6,7,8-tetrahydrofolate binding site.

Belongs to the Fmt family.

The catalysed reaction is L-methionyl-tRNA(fMet) + (6R)-10-formyltetrahydrofolate = N-formyl-L-methionyl-tRNA(fMet) + (6S)-5,6,7,8-tetrahydrofolate + H(+). In terms of biological role, attaches a formyl group to the free amino group of methionyl-tRNA(fMet). The formyl group appears to play a dual role in the initiator identity of N-formylmethionyl-tRNA by promoting its recognition by IF2 and preventing the misappropriation of this tRNA by the elongation apparatus. In Thermotoga sp. (strain RQ2), this protein is Methionyl-tRNA formyltransferase.